We begin with the raw amino-acid sequence, 277 residues long: 3-methyl-2-oxobutanoate hydroxymethyltransferase (277 aa).

Mg(2+) contacts are provided by D53 and D96. Residues 53-54, D96, and K126 each bind 3-methyl-2-oxobutanoate; that span reads DS. E128 is a Mg(2+) binding site. The active-site Proton acceptor is the E195.

Belongs to the PanB family. In terms of assembly, homodecamer; pentamer of dimers. Requires Mg(2+) as cofactor.

Its subcellular location is the cytoplasm. It catalyses the reaction 3-methyl-2-oxobutanoate + (6R)-5,10-methylene-5,6,7,8-tetrahydrofolate + H2O = 2-dehydropantoate + (6S)-5,6,7,8-tetrahydrofolate. The protein operates within cofactor biosynthesis; (R)-pantothenate biosynthesis; (R)-pantoate from 3-methyl-2-oxobutanoate: step 1/2. Functionally, catalyzes the reversible reaction in which hydroxymethyl group from 5,10-methylenetetrahydrofolate is transferred onto alpha-ketoisovalerate to form ketopantoate. This chain is 3-methyl-2-oxobutanoate hydroxymethyltransferase, found in Chlorobaculum tepidum (strain ATCC 49652 / DSM 12025 / NBRC 103806 / TLS) (Chlorobium tepidum).